The chain runs to 119 residues: Translation initiation factor 1A (119 aa).

The tract at residues 1–24 is disordered; the sequence is MSEDDVDNSVKDFESGEENEESIG. In terms of domain architecture, S1-like spans 24-98; the sequence is GRVILPNKKK…EKADVVYRYT (75 aa).

Belongs to the eIF-1A family.

Seems to be required for maximal rate of protein biosynthesis. Enhances ribosome dissociation into subunits and stabilizes the binding of the initiator Met-tRNA(I) to 40 S ribosomal subunits. This chain is Translation initiation factor 1A (eIF1A), found in Thermoplasma acidophilum (strain ATCC 25905 / DSM 1728 / JCM 9062 / NBRC 15155 / AMRC-C165).